Reading from the N-terminus, the 381-residue chain is Protein COS1 (381 aa).

Residues 1 to 42 (MKENELKNEKSVDVLSFKQLESQKIVLPQDLFRSSFTWFCYE) lie on the Cytoplasmic side of the membrane. The chain crosses the membrane as a helical span at residues 43–63 (IYKSLAFRIWMLLWLPLSVWW). Topologically, residues 64 to 72 (KLSNNCIYP) are extracellular. A helical membrane pass occupies residues 73–93 (LIVSLLVLFLGPIFVLVICGL). The Cytoplasmic segment spans residues 94 to 231 (SRKRSLSKQL…YRFKLTWFLK (138 aa)). A helical membrane pass occupies residues 232 to 252 (RISNIFMLIPFLNFLCCIYVS). Over 253-254 (RG) the chain is Extracellular. The chain crosses the membrane as a helical span at residues 255–275 (MCLLLRTFYLGWILFMLVQGF). Residues 276–381 (QNMRMIVLSV…QLSCSEESLA (106 aa)) lie on the Cytoplasmic side of the membrane.

This sequence belongs to the DUP/COS family.

The protein localises to the membrane. The sequence is that of Protein COS1 (COS1) from Saccharomyces cerevisiae (strain ATCC 204508 / S288c) (Baker's yeast).